We begin with the raw amino-acid sequence, 269 residues long: Formamidopyrimidine-DNA glycosylase (269 aa).

Pro2 acts as the Schiff-base intermediate with DNA in catalysis. Glu3 functions as the Proton donor in the catalytic mechanism. Catalysis depends on Lys57, which acts as the Proton donor; for beta-elimination activity. Residues His90, Arg109, and Lys150 each coordinate DNA. The FPG-type zinc-finger motif lies at 235–269 (RVYGRNGEPCRTCGTPIETAKHGQRSTFFCRRCQV). Arg259 acts as the Proton donor; for delta-elimination activity in catalysis.

Belongs to the FPG family. As to quaternary structure, monomer. Zn(2+) serves as cofactor.

The catalysed reaction is Hydrolysis of DNA containing ring-opened 7-methylguanine residues, releasing 2,6-diamino-4-hydroxy-5-(N-methyl)formamidopyrimidine.. It catalyses the reaction 2'-deoxyribonucleotide-(2'-deoxyribose 5'-phosphate)-2'-deoxyribonucleotide-DNA = a 3'-end 2'-deoxyribonucleotide-(2,3-dehydro-2,3-deoxyribose 5'-phosphate)-DNA + a 5'-end 5'-phospho-2'-deoxyribonucleoside-DNA + H(+). Its function is as follows. Involved in base excision repair of DNA damaged by oxidation or by mutagenic agents. Acts as a DNA glycosylase that recognizes and removes damaged bases. Has a preference for oxidized purines, such as 7,8-dihydro-8-oxoguanine (8-oxoG). Has AP (apurinic/apyrimidinic) lyase activity and introduces nicks in the DNA strand. Cleaves the DNA backbone by beta-delta elimination to generate a single-strand break at the site of the removed base with both 3'- and 5'-phosphates. This is Formamidopyrimidine-DNA glycosylase from Pectobacterium atrosepticum (strain SCRI 1043 / ATCC BAA-672) (Erwinia carotovora subsp. atroseptica).